We begin with the raw amino-acid sequence, 344 residues long: N-acetyl-gamma-glutamyl-phosphate reductase (344 aa).

The active site involves Cys150.

This sequence belongs to the NAGSA dehydrogenase family. Type 1 subfamily.

It localises to the cytoplasm. The enzyme catalyses N-acetyl-L-glutamate 5-semialdehyde + phosphate + NADP(+) = N-acetyl-L-glutamyl 5-phosphate + NADPH + H(+). It functions in the pathway amino-acid biosynthesis; L-arginine biosynthesis; N(2)-acetyl-L-ornithine from L-glutamate: step 3/4. Its function is as follows. Catalyzes the NADPH-dependent reduction of N-acetyl-5-glutamyl phosphate to yield N-acetyl-L-glutamate 5-semialdehyde. This is N-acetyl-gamma-glutamyl-phosphate reductase from Pseudomonas fluorescens (strain SBW25).